Reading from the N-terminus, the 269-residue chain is Formamidopyrimidine-DNA glycosylase (269 aa).

Proline 2 serves as the catalytic Schiff-base intermediate with DNA. Residue glutamate 3 is the Proton donor of the active site. Lysine 57 (proton donor; for beta-elimination activity) is an active-site residue. The DNA site is built by histidine 90, arginine 109, and lysine 150. An FPG-type zinc finger spans residues 235-269 (QVYGREGEPCRVCGTPILAGKHAQRRTYWCRRCQK). Arginine 259 (proton donor; for delta-elimination activity) is an active-site residue.

The protein belongs to the FPG family. In terms of assembly, monomer. Zn(2+) serves as cofactor.

It carries out the reaction Hydrolysis of DNA containing ring-opened 7-methylguanine residues, releasing 2,6-diamino-4-hydroxy-5-(N-methyl)formamidopyrimidine.. The catalysed reaction is 2'-deoxyribonucleotide-(2'-deoxyribose 5'-phosphate)-2'-deoxyribonucleotide-DNA = a 3'-end 2'-deoxyribonucleotide-(2,3-dehydro-2,3-deoxyribose 5'-phosphate)-DNA + a 5'-end 5'-phospho-2'-deoxyribonucleoside-DNA + H(+). Involved in base excision repair of DNA damaged by oxidation or by mutagenic agents. Acts as a DNA glycosylase that recognizes and removes damaged bases. Has a preference for oxidized purines, such as 7,8-dihydro-8-oxoguanine (8-oxoG). Has AP (apurinic/apyrimidinic) lyase activity and introduces nicks in the DNA strand. Cleaves the DNA backbone by beta-delta elimination to generate a single-strand break at the site of the removed base with both 3'- and 5'-phosphates. In Cronobacter sakazakii (strain ATCC BAA-894) (Enterobacter sakazakii), this protein is Formamidopyrimidine-DNA glycosylase.